The sequence spans 350 residues: m7GpppX diphosphatase (350 aa).

Serine 2 is subject to N-acetylserine. Serine 60 is modified (phosphoserine). Threonine 66 is modified (phosphothreonine). Position 66 is a phosphothreonine; by YAK1 (threonine 66). The residue at position 70 (tyrosine 70) is a Phosphotyrosine. At threonine 120 the chain carries Phosphothreonine. Substrate contacts are provided by residues glutamate 171, lysine 196, and 259-270; that span reads HYQPSYYHFHIH. The short motif at 266-270 is the Histidine triad motif element; sequence HFHIH. The Nucleophile role is filled by histidine 268.

It belongs to the HIT family. As to quaternary structure, homodimer. Forms heterodimer with DCS2; the interaction inhibits the DCS1 scavenger decapping activity during post-diauxic growth. Phosphorylated. Phosphorylation occurs upon glucose deprivation.

The protein resides in the cytoplasm. Its subcellular location is the perinuclear region. It is found in the P-body. It catalyses the reaction a 5'-end (N(7)-methyl 5'-triphosphoguanosine)-ribonucleoside in mRNA + H2O = N(7)-methyl-GMP + a 5'-end diphospho-ribonucleoside in mRNA + 2 H(+). Its activity is regulated as follows. The hydrolytic product 7-methylguanosine diphosphate (m7GDP) efficiently inhibits the decapping scavenger activity and acts as a competitive inhibitor in vitro. Decapping scavenger enzyme that catalyzes the cleavage of a residual cap structure following the degradation of mRNAs by the 3'-&gt;5' exosome-mediated mRNA decay pathway. Hydrolyzes cap analog structures like 7-methylguanosine nucleoside triphosphate (m7GpppG) and tri-methyl guanosine nucleoside triphosphate (m3(2,2,7)GpppG) with up to 10 nucleotide substrates (small capped oligoribonucleotides) and specifically releases 5'-phosphorylated RNA fragments and 7-methylguanosine monophosphate (m7GMP) or tri-methyl guanosine nucleoside monophosphate (m3(2,2,7)GMP), respectively. Does not hydrolyze unmethylated cap analog (GpppG) and shows no decapping activity on intact m7GpppG-capped mRNA molecules longer than 25 nucleotides. Does not hydrolyze 7-methylguanosine diphosphate (m7GDP) and tri-methylguanosine diphosphate (m3(2,2,7)GDP) to (m(7)GMP) and m3(2,2,7)GMP, respectively. May also play a role in the 5'-&gt;3 mRNA decay pathway; m7GDP, the downstream product released by the 5'-&gt;3' mRNA mediated decapping activity, may be also converted by DCS1 to m7GMP. Binds to m7GpppG and strongly to m7GDP. May also regulate the 5'-&gt;3' exoribonucleolytic mRNA decay pathway in a cap-independent manner. Negatively regulates trehalase activity. This Saccharomyces cerevisiae (strain ATCC 204508 / S288c) (Baker's yeast) protein is m7GpppX diphosphatase.